The primary structure comprises 427 residues: UDP-N-acetylglucosamine 1-carboxyvinyltransferase 1 (427 aa).

24–25 (KN) contributes to the phosphoenolpyruvate binding site. UDP-N-acetyl-alpha-D-glucosamine is bound at residue R97. Residue C121 is the Proton donor of the active site. Residue C121 is modified to 2-(S-cysteinyl)pyruvic acid O-phosphothioketal. UDP-N-acetyl-alpha-D-glucosamine contacts are provided by residues 126–130 (RPIDL), D309, and V331.

This sequence belongs to the EPSP synthase family. MurA subfamily.

Its subcellular location is the cytoplasm. The catalysed reaction is phosphoenolpyruvate + UDP-N-acetyl-alpha-D-glucosamine = UDP-N-acetyl-3-O-(1-carboxyvinyl)-alpha-D-glucosamine + phosphate. The protein operates within cell wall biogenesis; peptidoglycan biosynthesis. In terms of biological role, cell wall formation. Adds enolpyruvyl to UDP-N-acetylglucosamine. This Lactococcus lactis subsp. lactis (strain IL1403) (Streptococcus lactis) protein is UDP-N-acetylglucosamine 1-carboxyvinyltransferase 1.